The primary structure comprises 1197 residues: Serine/threonine-protein kinase pakA (1197 aa).

5 disordered regions span residues 1 to 96 (MEEK…PIYR), 328 to 383 (QKED…KNID), 430 to 468 (REEEEENEDRVERELASRRRQEEDRIKREEEEEEEEQRN), 485 to 543 (EEEE…NLMG), and 562 to 819 (NSSG…RVGT). The span at 19–30 (QKFEQFLDKTDK) shows a compositional bias: basic and acidic residues. The span at 34 to 49 (ATRNNYRGPVSSSTGI) shows a compositional bias: polar residues. A compositionally biased stretch (basic and acidic residues) spans 51–69 (NDKEKKSHSYFKVREEGSN). Residues 70-79 (KRPSSFSASN) show a composition bias toward polar residues. Low complexity-rich tracts occupy residues 80–94 (PITPSSPQSTHSSPI) and 346–381 (NNNNNENNENDNNNNNNNNNNNNNNNNNNNNNNNKN). Residues 439-458 (RVERELASRRRQEEDRIKRE) show a composition bias toward basic and acidic residues. Residues 494-523 (SQLQSSQQQQKSSSTQRSSNTVTSTSSSST) show a composition bias toward low complexity. The span at 524–536 (GGDSNPSTSQKPT) shows a compositional bias: polar residues. Phosphothreonine; by PKB is present on threonine 585. A compositionally biased stretch (polar residues) spans 593 to 615 (SENTPLVSSIDNNGVNNKMSRSH). Low complexity-rich tracts occupy residues 636–653 (NVNNSNNNNNNNNINNNH) and 671–707 (SSSMSTPSISPSQAGNSATSTVPSSPISASTSMSSPT). Residues 718 to 727 (TTSTGSTRKG) show a composition bias toward polar residues. Positions 728–737 (SISEREDKKK) are enriched in basic and acidic residues. Residues 739–756 (SSSSTSSSSSSNGGLSSS) are compositionally biased toward low complexity. A compositionally biased stretch (basic and acidic residues) spans 757–790 (GKDHKKDHSSEEKEKEKKSFFNKLFSKEKKDHHS). Residues 817 to 830 (VGTPFNVKHDVHVN) form the CRIB domain. A Protein kinase domain is found at 911–1164 (YYNINKIGEG…SSSLLHHPFL (254 aa)). Residues 917–925 (IGEGGAGEV) and lysine 940 each bind ATP. The Proton acceptor role is filled by aspartate 1032.

It belongs to the protein kinase superfamily. STE Ser/Thr protein kinase family. STE20 subfamily. Mg(2+) serves as cofactor. Phosphorylation on Thr-585 results in cAMP-mediated activation and localization to the cytoskeleton. In terms of tissue distribution, colocalizes with myosin II to the cleavage furrow of cells undergoing cytokinesis and the posterior cortex of polarized cells.

It is found in the cytoplasm. Its subcellular location is the cytosol. The protein resides in the cytoskeleton. The catalysed reaction is L-seryl-[protein] + ATP = O-phospho-L-seryl-[protein] + ADP + H(+). The enzyme catalyses L-threonyl-[protein] + ATP = O-phospho-L-threonyl-[protein] + ADP + H(+). Regulator of the myosin II component of the cytoskeleton: required for regulation of cytokinesis. Functions during chemotaxis, required for maintaining the direction of cell movement, suppressing lateral pseudopod extension, and proper retraction of the posterior of chemotaxing cells. The polypeptide is Serine/threonine-protein kinase pakA (pakA) (Dictyostelium discoideum (Social amoeba)).